A 231-amino-acid chain; its full sequence is Thrombin-like enzyme leucurobin (231 aa).

Positions Val-1–Ala-223 constitute a Peptidase S1 domain. Disulfide bonds link Cys-7-Cys-139, Cys-26-Cys-42, Cys-74-Cys-230, Cys-118-Cys-184, Cys-150-Cys-163, and Cys-174-Cys-199. Active-site charge relay system residues include His-41 and Asp-86. Asn-146 carries an N-linked (GlcNAc...) asparagine glycan. Ser-178 acts as the Charge relay system in catalysis. The N-linked (GlcNAc...) asparagine glycan is linked to Asn-225.

It belongs to the peptidase S1 family. Snake venom subfamily. In terms of assembly, monomer. In terms of processing, glycosylated. Expressed by the venom gland.

It is found in the secreted. It catalyses the reaction Selective cleavage of Arg-|-Xaa bond in fibrinogen, to form fibrin, and release fibrinopeptide A. The specificity of further degradation of fibrinogen varies with species origin of the enzyme.. With respect to regulation, inhibited by PMSF and benzamidine. Its clotting effect is strongly inhibited by antibothropic serum. Is not inhibited by heparin. Its function is as follows. Thrombin-like snake venom serine protease that cleaves Arg-Gly bonds in alpha-chain of fibrinogen (FGA). Induces temporary episodes of opisthotonos and rapid rolling around the long axis of the animal (gyroxin-like effect), when injected into the tail veins of mice (0.143 ug/g mouse). The protein is Thrombin-like enzyme leucurobin of Bothrops leucurus (Whitetail lancehead).